Here is a 258-residue protein sequence, read N- to C-terminus: Acetylglutamate kinase (258 aa).

Substrate-binding positions include 44–45 (GG), arginine 66, and asparagine 158. ATP-binding positions include 181-186 (DVSGIL) and 209-211 (IIT).

Belongs to the acetylglutamate kinase family. ArgB subfamily. Homodimer.

Its subcellular location is the cytoplasm. The catalysed reaction is N-acetyl-L-glutamate + ATP = N-acetyl-L-glutamyl 5-phosphate + ADP. The protein operates within amino-acid biosynthesis; L-arginine biosynthesis; N(2)-acetyl-L-ornithine from L-glutamate: step 2/4. Its function is as follows. Catalyzes the ATP-dependent phosphorylation of N-acetyl-L-glutamate. The polypeptide is Acetylglutamate kinase (Salmonella arizonae (strain ATCC BAA-731 / CDC346-86 / RSK2980)).